A 440-amino-acid polypeptide reads, in one-letter code: Chromosome partition protein MukF (440 aa).

The segment at 208 to 236 is leucine-zipper; that stretch reads LSETSGTLRELQDTLEAAGDKLQANLLRI.

This sequence belongs to the MukF family. In terms of assembly, interacts, and probably forms a ternary complex, with MukE and MukB via its C-terminal region. The complex formation is stimulated by calcium or magnesium. It is required for an interaction between MukE and MukB.

It is found in the cytoplasm. Its subcellular location is the nucleoid. Involved in chromosome condensation, segregation and cell cycle progression. May participate in facilitating chromosome segregation by condensation DNA from both sides of a centrally located replisome during cell division. Not required for mini-F plasmid partitioning. Probably acts via its interaction with MukB and MukE. Overexpression results in anucleate cells. It has a calcium binding activity. The protein is Chromosome partition protein MukF of Yersinia enterocolitica serotype O:8 / biotype 1B (strain NCTC 13174 / 8081).